The primary structure comprises 110 residues: Small ribosomal subunit protein bS18 (110 aa).

The segment covering 1–18 has biased composition (low complexity); the sequence is MSEATTTTTTTSAPRPGG. The tract at residues 1–41 is disordered; that stretch reads MSEATTTTTTTSAPRPGGRPSGPRPDRGPGGPRKKRPFQRR. Over residues 32 to 41 the composition is skewed to basic residues; it reads PRKKRPFQRR.

Belongs to the bacterial ribosomal protein bS18 family. In terms of assembly, part of the 30S ribosomal subunit. Forms a tight heterodimer with protein bS6.

Its function is as follows. Binds as a heterodimer with protein bS6 to the central domain of the 16S rRNA, where it helps stabilize the platform of the 30S subunit. In Trichlorobacter lovleyi (strain ATCC BAA-1151 / DSM 17278 / SZ) (Geobacter lovleyi), this protein is Small ribosomal subunit protein bS18.